We begin with the raw amino-acid sequence, 552 residues long: Urocanate hydratase (552 aa).

Residues Gly-49–Gly-50, Gln-127, Gly-173–Gly-175, Asp-193, Asn-239–Ala-240, Gln-260–His-264, Tyr-270–Ile-271, and Tyr-319 each bind NAD(+). Cys-407 is a catalytic residue. Residue Gly-489 participates in NAD(+) binding.

This sequence belongs to the urocanase family. The cofactor is NAD(+).

The protein localises to the cytoplasm. It carries out the reaction 4-imidazolone-5-propanoate = trans-urocanate + H2O. Its pathway is amino-acid degradation; L-histidine degradation into L-glutamate; N-formimidoyl-L-glutamate from L-histidine: step 2/3. In terms of biological role, catalyzes the conversion of urocanate to 4-imidazolone-5-propionate. This Bacillus cereus (strain G9842) protein is Urocanate hydratase.